Reading from the N-terminus, the 399-residue chain is Phosphoglycerate kinase (399 aa).

Substrate contacts are provided by residues 20–22 (DFN), Arg-35, 58–61 (HLGR), Arg-117, and Arg-154. ATP contacts are provided by residues Lys-204, Gly-295, Glu-326, and 355-358 (GGDS).

Belongs to the phosphoglycerate kinase family. As to quaternary structure, monomer.

It is found in the cytoplasm. It carries out the reaction (2R)-3-phosphoglycerate + ATP = (2R)-3-phospho-glyceroyl phosphate + ADP. Its pathway is carbohydrate degradation; glycolysis; pyruvate from D-glyceraldehyde 3-phosphate: step 2/5. In Beutenbergia cavernae (strain ATCC BAA-8 / DSM 12333 / CCUG 43141 / JCM 11478 / NBRC 16432 / NCIMB 13614 / HKI 0122), this protein is Phosphoglycerate kinase.